Consider the following 226-residue polypeptide: MNENLFTSFITPMMLGLPLVTLIILFPSLLFPSSNRLINNRLVSLQQWALQLMSKQMMSIHNTKGQTWTLMLMSLILFIGSTNLLGLLPHSFTPTTQLSMNLGMAIPLWAGAVITGFRNKTKASLAHFYPQGTPTPLIPMLVIIETISLFIQPMALAVRLTANITAGHLLIHLIGGATLALTSISPTTALITFIILILLTILEFELGTREAYVFTLLVSLYLHDNT.

5 helical membrane-spanning segments follow: residues 9-29 (FITPMMLGLPLVTLIILFPSL), 68-88 (WTLMLMSLILFIGSTNLLGLL), 97-117 (QLSMNLGMAIPLWAGAVITGF), 138-158 (IPMLVIIETISLFIQPMALAV), and 184-204 (ISPTTALITFIILILLTILEF).

The protein belongs to the ATPase A chain family. Component of the ATP synthase complex composed at least of ATP5F1A/subunit alpha, ATP5F1B/subunit beta, ATP5MC1/subunit c (homooctomer), MT-ATP6/subunit a, MT-ATP8/subunit 8, ATP5ME/subunit e, ATP5MF/subunit f, ATP5MG/subunit g, ATP5MK/subunit k, ATP5MJ/subunit j, ATP5F1C/subunit gamma, ATP5F1D/subunit delta, ATP5F1E/subunit epsilon, ATP5PF/subunit F6, ATP5PB/subunit b, ATP5PD/subunit d, ATP5PO/subunit OSCP. ATP synthase complex consists of a soluble F(1) head domain (subunits alpha(3) and beta(3)) - the catalytic core - and a membrane F(0) domain - the membrane proton channel (subunits c, a, 8, e, f, g, k and j). These two domains are linked by a central stalk (subunits gamma, delta, and epsilon) rotating inside the F1 region and a stationary peripheral stalk (subunits F6, b, d, and OSCP). Interacts with DNAJC30; interaction is direct.

Its subcellular location is the mitochondrion inner membrane. The enzyme catalyses H(+)(in) = H(+)(out). In terms of biological role, subunit a, of the mitochondrial membrane ATP synthase complex (F(1)F(0) ATP synthase or Complex V) that produces ATP from ADP in the presence of a proton gradient across the membrane which is generated by electron transport complexes of the respiratory chain. ATP synthase complex consist of a soluble F(1) head domain - the catalytic core - and a membrane F(1) domain - the membrane proton channel. These two domains are linked by a central stalk rotating inside the F(1) region and a stationary peripheral stalk. During catalysis, ATP synthesis in the catalytic domain of F(1) is coupled via a rotary mechanism of the central stalk subunits to proton translocation. With the subunit c (ATP5MC1), forms the proton-conducting channel in the F(0) domain, that contains two crucial half-channels (inlet and outlet) that facilitate proton movement from the mitochondrial intermembrane space (IMS) into the matrix. Protons are taken up via the inlet half-channel and released through the outlet half-channel, following a Grotthuss mechanism. The sequence is that of ATP synthase F(0) complex subunit a from Capra hircus (Goat).